Here is a 379-residue protein sequence, read N- to C-terminus: Tubby-like F-box protein 7 (379 aa).

Over residues 18-28 (FHQGETTTAPE) the composition is skewed to polar residues. Positions 18-41 (FHQGETTTAPESESIPPPSNMAGS) are disordered. The 56-residue stretch at 42–97 (SSWSAMLPELLGEIIRRVEETEDRWPQRRDVVTCACVSKKWREITHDFARSSLNSG) folds into the F-box domain. Disordered regions lie at residues 193–212 (SQPP…RRFA) and 248–278 (TLRC…IMKK).

It belongs to the TUB family. Ubiquitous.

The sequence is that of Tubby-like F-box protein 7 from Arabidopsis thaliana (Mouse-ear cress).